A 199-amino-acid polypeptide reads, in one-letter code: Protein GrpE (199 aa).

The segment covering 1 to 24 (MSKQNKKDWKKFRDEHKEEHKVEN) has biased composition (basic and acidic residues). The segment at 1 to 52 (MSKQNKKDWKKFRDEHKEEHKVENEILEEETDEESQHQEPALGHPSYTALEE) is disordered.

Belongs to the GrpE family. In terms of assembly, homodimer.

It localises to the cytoplasm. Participates actively in the response to hyperosmotic and heat shock by preventing the aggregation of stress-denatured proteins, in association with DnaK and GrpE. It is the nucleotide exchange factor for DnaK and may function as a thermosensor. Unfolded proteins bind initially to DnaJ; upon interaction with the DnaJ-bound protein, DnaK hydrolyzes its bound ATP, resulting in the formation of a stable complex. GrpE releases ADP from DnaK; ATP binding to DnaK triggers the release of the substrate protein, thus completing the reaction cycle. Several rounds of ATP-dependent interactions between DnaJ, DnaK and GrpE are required for fully efficient folding. In Legionella pneumophila (strain Lens), this protein is Protein GrpE.